Here is a 224-residue protein sequence, read N- to C-terminus: Mammalian ependymin-related protein 1 (224 aa).

The N-terminal stretch at 1–37 is a signal peptide; sequence MLTRAPRRLVQGPRETWLLGGLWVWILCGLGMAGSPG. 3 disulfide bridges follow: C42/C172, C88/C222, and C113/C210. N-linked (GlcNAc...) asparagine glycans are attached at residues N130 and N182.

This sequence belongs to the ependymin family. As to quaternary structure, homodimer. Post-translationally, N-glycosylated; the glycan contains mannose-6-phosphate moieties. As to expression, detected in brain (at protein level).

Its subcellular location is the lysosome lumen. The protein resides in the secreted. Functionally, binds anionic lipids and gangliosides at acidic pH. This chain is Mammalian ependymin-related protein 1 (Epdr1), found in Rattus norvegicus (Rat).